We begin with the raw amino-acid sequence, 445 residues long: 3-phosphoshikimate 1-carboxyvinyltransferase (445 aa).

3-phosphoshikimate contacts are provided by lysine 28, serine 29, and arginine 33. Lysine 28 contacts phosphoenolpyruvate. Residues glycine 101 and arginine 129 each coordinate phosphoenolpyruvate. The 3-phosphoshikimate site is built by serine 175, glutamine 177, aspartate 328, and lysine 355. Glutamine 177 lines the phosphoenolpyruvate pocket. The Proton acceptor role is filled by aspartate 328. Positions 359 and 402 each coordinate phosphoenolpyruvate.

The protein belongs to the EPSP synthase family. Monomer.

It is found in the cytoplasm. The catalysed reaction is 3-phosphoshikimate + phosphoenolpyruvate = 5-O-(1-carboxyvinyl)-3-phosphoshikimate + phosphate. Its pathway is metabolic intermediate biosynthesis; chorismate biosynthesis; chorismate from D-erythrose 4-phosphate and phosphoenolpyruvate: step 6/7. Functionally, catalyzes the transfer of the enolpyruvyl moiety of phosphoenolpyruvate (PEP) to the 5-hydroxyl of shikimate-3-phosphate (S3P) to produce enolpyruvyl shikimate-3-phosphate and inorganic phosphate. This is 3-phosphoshikimate 1-carboxyvinyltransferase from Rhodopseudomonas palustris (strain BisA53).